A 626-amino-acid polypeptide reads, in one-letter code: ATP-dependent zinc metalloprotease FtsH (626 aa).

The Cytoplasmic portion of the chain corresponds to 1–5 (MNFRN). A helical transmembrane segment spans residues 6–26 (LAIWLVIVAVLGGVFVVSQNS). At 27 to 98 (RTKSSSEISY…DVKFKSGSIS (72 aa)) the chain is on the periplasmic side. A helical membrane pass occupies residues 99 to 119 (FLAILVQLLPILLVVGVWLFL). At 120–626 (MRQMQGGAKG…SPGAGASVTA (507 aa)) the chain is on the cytoplasmic side. 191 to 198 (GPPGTGKT) provides a ligand contact to ATP. Position 413 (histidine 413) interacts with Zn(2+). Glutamate 414 is an active-site residue. Zn(2+) contacts are provided by histidine 417 and aspartate 491.

The protein in the central section; belongs to the AAA ATPase family. In the C-terminal section; belongs to the peptidase M41 family. In terms of assembly, homohexamer. The cofactor is Zn(2+).

It is found in the cell inner membrane. In terms of biological role, acts as a processive, ATP-dependent zinc metallopeptidase for both cytoplasmic and membrane proteins. Plays a role in the quality control of integral membrane proteins. Its function is as follows. Absence of FtsH leads to increased sigma-32 levels, which suggests, in analogy to E.coli, that sigma-32 is a substrate for FtsH. May play a role in the general stress response, as overexpression leads to improved resistance to salt stress. This Caulobacter vibrioides (strain NA1000 / CB15N) (Caulobacter crescentus) protein is ATP-dependent zinc metalloprotease FtsH.